We begin with the raw amino-acid sequence, 245 residues long: tRNA (guanine-N(1)-)-methyltransferase (245 aa).

S-adenosyl-L-methionine-binding positions include glycine 113 and 133-138; that span reads IGDYVL.

Belongs to the RNA methyltransferase TrmD family. In terms of assembly, homodimer.

It is found in the cytoplasm. It carries out the reaction guanosine(37) in tRNA + S-adenosyl-L-methionine = N(1)-methylguanosine(37) in tRNA + S-adenosyl-L-homocysteine + H(+). Its function is as follows. Specifically methylates guanosine-37 in various tRNAs. This is tRNA (guanine-N(1)-)-methyltransferase from Oceanobacillus iheyensis (strain DSM 14371 / CIP 107618 / JCM 11309 / KCTC 3954 / HTE831).